A 384-amino-acid chain; its full sequence is Putative spore germination protein YfkR (384 aa).

Residues M1–G20 form the signal peptide. C21 is lipidated: N-palmitoyl cysteine. C21 is lipidated: S-diacylglycerol cysteine.

This sequence belongs to the GerABKC lipoprotein family.

It localises to the cell membrane. May be involved in spore germination. The chain is Putative spore germination protein YfkR (yfkR) from Bacillus subtilis (strain 168).